Consider the following 122-residue polypeptide: MPTTNQLVRKERKRQTKKTATPALQGSPQRRGVCTRVSTTTPKKPNSALRKIARVRLTNGHEVTAYVPGEGHNLQEHSVVLVRGGRVKDLPGVRYKVVRGALDALGVEGRKQGRSKYGTKKS.

Residues 1–45 are disordered; that stretch reads MPTTNQLVRKERKRQTKKTATPALQGSPQRRGVCTRVSTTTPKKP. The segment covering 18-28 has biased composition (polar residues); the sequence is KTATPALQGSP. D89 carries the 3-methylthioaspartic acid modification.

It belongs to the universal ribosomal protein uS12 family. In terms of assembly, part of the 30S ribosomal subunit. Contacts proteins S8 and S17. May interact with IF1 in the 30S initiation complex.

In terms of biological role, with S4 and S5 plays an important role in translational accuracy. Functionally, interacts with and stabilizes bases of the 16S rRNA that are involved in tRNA selection in the A site and with the mRNA backbone. Located at the interface of the 30S and 50S subunits, it traverses the body of the 30S subunit contacting proteins on the other side and probably holding the rRNA structure together. The combined cluster of proteins S8, S12 and S17 appears to hold together the shoulder and platform of the 30S subunit. The chain is Small ribosomal subunit protein uS12 from Rubrobacter xylanophilus (strain DSM 9941 / JCM 11954 / NBRC 16129 / PRD-1).